A 331-amino-acid chain; its full sequence is FMRFamide-related neuropeptides (331 aa).

An N-terminal signal peptide occupies residues 1 to 25 (MRCWSPCSLLVVIVIYCLSSHTSEA). A propeptide spanning residues 26 to 65 (FDLAQACVESQRLSLLPICDTIFAVQQEGAQQSADDGMRS) is cleaved from the precursor. Residues Phe-71 and Phe-83 each carry the phenylalanine amide modification. The propeptide occupies 86–94 (NVPDLPFED). At Phe-100 the chain carries Phenylalanine amide. Residues 103–168 (AAPQLDDLLK…YIDDVEDSDV (66 aa)) constitute a propeptide that is removed on maturation. Residues 122 to 158 (QKADETSVRRKRSTDAAPQNNAENPEQKNDSAKITKR) are disordered. Residues 146 to 158 (PEQKNDSAKITKR) show a composition bias toward basic and acidic residues. A phenylalanine amide mark is found at Phe-174 and Phe-181. The propeptide occupies 184 to 194 (NPSDAGNKLTE). Phe-200 carries the post-translational modification Phenylalanine amide. Residues 203 to 205 (DPE) constitute a propeptide that is removed on maturation. Phe-211 carries the post-translational modification Phenylalanine amide. Positions 214–216 (SDD) are excised as a propeptide. Phenylalanine amide is present on Phe-222. A propeptide spanning residues 225 to 236 (NPSDVEDELEED) is cleaved from the precursor. Phenylalanine amide is present on Phe-242. A propeptide spanning residues 245 to 254 (GGEDDEEEAE) is cleaved from the precursor. The residue at position 260 (Phe-260) is a Phenylalanine amide. Residues 263 to 265 (DPE) constitute a propeptide that is removed on maturation. Residue Phe-271 is modified to Phenylalanine amide. Residues 274-277 (SGED) constitute a propeptide that is removed on maturation. Residues 282–296 (RFGRNPDEQEADKRF) are compositionally biased toward basic and acidic residues. Residues 282–310 (RFGRNPDEQEADKRFMRFGRGGEDDEVST) are disordered. Phe-283 is subject to Phenylalanine amide. The propeptide occupies 286-293 (NPDEQEAD). Residue Phe-299 is modified to Phenylalanine amide. A propeptide spanning residues 302–312 (GGEDDEVSTED) is cleaved from the precursor. Phe-318 is modified (phenylalanine amide). Positions 321–331 (SADKCKGCLEG) are excised as a propeptide.

The protein belongs to the FARP (FMRFamide related peptide) family.

The protein resides in the secreted. In terms of biological role, excitatory neurotransmitters that directly modulate chromatophore function by activating chromatophore expansion at the chromatophore neuromuscular junction. The protein is FMRFamide-related neuropeptides of Doryteuthis pealeii (Longfin inshore squid).